A 382-amino-acid chain; its full sequence is Serine/arginine-rich splicing factor SR45a (382 aa).

Composition is skewed to low complexity over residues 30 to 45, 54 to 68, 177 to 195, and 202 to 219; these read PMSY…SLSP, VSRS…SVSS, PSYS…SRSY, and SYSP…YSPF. 2 disordered regions span residues 30 to 76 and 150 to 382; these read PMSY…PGNS and KARR…SVSP. The segment covering 288-316 has biased composition (basic and acidic residues); that stretch reads RARDRSCSPYYRGRDRSYSPHYQGRDRSY. Positions 329–343 are enriched in low complexity; sequence VSGSVSPGGRSMSRS. Residues 345 to 361 show a composition bias toward basic residues; sequence SPRKGRKESRSKSRRHD. The span at 364 to 382 shows a compositional bias: low complexity; sequence SSMCHSRSARSSTSRSVSP.

It belongs to the splicing factor SR family. SR45 subfamily. As to quaternary structure, component of the spliceosome. Homodimer. Interacts with PRP38, SCL28, SR45, RNU1 and U2AF35B. In terms of processing, phosphorylated. As to expression, expressed in leaves, stems and roots.

It localises to the nucleus speckle. Probable splicing factor involved in constitutive and/or alternative splicing events. May bridge the 5' and 3' components of the spliceosome. This chain is Serine/arginine-rich splicing factor SR45a (SR45A), found in Arabidopsis thaliana (Mouse-ear cress).